The following is a 234-amino-acid chain: Peptidyl-prolyl cis-trans isomerase FKBP17-3, chloroplastic (234 aa).

Residues 1 to 28 constitute a chloroplast transit peptide; the sequence is MATLFTATVPSHHRFVSPSQHPKQSLLS. One can recognise a PPIase FKBP-type domain in the interval 130–228; the sequence is GYLVVFDVKG…DYIIEVDTVY (99 aa).

This sequence belongs to the FKBP-type PPIase family.

It localises to the plastid. The protein resides in the chloroplast thylakoid lumen. It carries out the reaction [protein]-peptidylproline (omega=180) = [protein]-peptidylproline (omega=0). PPIases accelerate the folding of proteins. It catalyzes the cis-trans isomerization of proline imidic peptide bonds in oligopeptides. This chain is Peptidyl-prolyl cis-trans isomerase FKBP17-3, chloroplastic (FKBP17-3), found in Arabidopsis thaliana (Mouse-ear cress).